Here is a 344-residue protein sequence, read N- to C-terminus: Ion-translocating oxidoreductase complex subunit D (344 aa).

Helical transmembrane passes span 23 to 43 (LVLG…GAGT), 44 to 64 (LLNL…MLAL), 80 to 100 (VTAL…LTLV), and 120 to 140 (PFNP…LEMT). The residue at position 172 (Thr172) is an FMN phosphoryl threonine. 5 consecutive transmembrane segments (helical) span residues 198–218 (LGGA…LFLL), 222–242 (LFTW…SLLF), 252–272 (GSPL…FIVT), 285–305 (LLFG…GGYP), and 306–326 (DGVA…DYYT).

This sequence belongs to the NqrB/RnfD family. As to quaternary structure, the complex is composed of six subunits: RnfA, RnfB, RnfC, RnfD, RnfE and RnfG. Requires FMN as cofactor.

It is found in the cell inner membrane. Its function is as follows. Part of a membrane-bound complex that couples electron transfer with translocation of ions across the membrane. The protein is Ion-translocating oxidoreductase complex subunit D of Pseudomonas paraeruginosa (strain DSM 24068 / PA7) (Pseudomonas aeruginosa (strain PA7)).